A 625-amino-acid chain; its full sequence is DNA-directed RNA polymerase subunit gamma (625 aa).

Zn(2+)-binding residues include C71, C73, C86, and C89. Positions 467, 469, and 471 each coordinate Mg(2+).

Belongs to the RNA polymerase beta' chain family. RpoC1 subfamily. As to quaternary structure, in cyanobacteria the RNAP catalytic core is composed of 2 alpha, 1 beta, 1 beta', 1 gamma and 1 omega subunit. When a sigma factor is associated with the core the holoenzyme is formed, which can initiate transcription. The cofactor is Mg(2+). Zn(2+) is required as a cofactor.

It catalyses the reaction RNA(n) + a ribonucleoside 5'-triphosphate = RNA(n+1) + diphosphate. DNA-dependent RNA polymerase catalyzes the transcription of DNA into RNA using the four ribonucleoside triphosphates as substrates. In Trichormus variabilis (strain ATCC 29413 / PCC 7937) (Anabaena variabilis), this protein is DNA-directed RNA polymerase subunit gamma.